A 238-amino-acid polypeptide reads, in one-letter code: Endonuclease III homolog (238 aa).

Residues 129–155 (REKGLPREMKDLISLPGIGNKMALLYM) enclose the HhH domain. Residue Lys-149 is the Nucleophile; for N-glycosylase activity of the active site. [4Fe-4S] cluster contacts are provided by Cys-217, Cys-224, Cys-227, and Cys-233.

This sequence belongs to the Nth/MutY family. [4Fe-4S] cluster is required as a cofactor.

It localises to the nucleus. The protein resides in the mitochondrion. The catalysed reaction is 2'-deoxyribonucleotide-(2'-deoxyribose 5'-phosphate)-2'-deoxyribonucleotide-DNA = a 3'-end 2'-deoxyribonucleotide-(2,3-dehydro-2,3-deoxyribose 5'-phosphate)-DNA + a 5'-end 5'-phospho-2'-deoxyribonucleoside-DNA + H(+). Functionally, bifunctional DNA N-glycosylase with associated apurinic/apyrimidinic (AP) lyase function that catalyzes the first step in base excision repair (BER), the primary repair pathway for the repair of oxidative DNA damage. The DNA N-glycosylase activity releases the damaged DNA base from DNA by cleaving the N-glycosidic bond, leaving an AP site. The AP lyase activity cleaves the phosphodiester bond 3' to the AP site by a beta-elimination. Primarily recognizes and repairs oxidative base damage of pyrimidines. The sequence is that of Endonuclease III homolog from Encephalitozoon cuniculi (strain GB-M1) (Microsporidian parasite).